Consider the following 411-residue polypeptide: MSLLDGLASSPRAPLQSSKARMKKLPKKSQNEKYRLKYLRLRKAAKATVFENAAICDEIARLEEKFLKAKEERRYLLKKLLQLQALTEGEVQAAAPSHSSSLPLTYGVASSVGTIQGAGPISGPSTGAEEPFGKKTKKEKKEKGKENNKLEVLKKTCKKKKMAGGARKLVQPIALDPSGRPVFPIGLGGLTVYSLGEIITDRPGFHDESAIYPVGYCSTRIYASMKCPDQKCLYTCQIKDGGVQPQFEIVPEDDPQNAIVSSSADACHAELLRTISTTMGKLMPNLLPAGADFFGFSHPAIHNLIQSCPGARKCINYQWVKFDVCKPGDGQLPEGLPENDAAMSFEAFQRQIFDEDQNDPLLPGSLDLPELQPAAFVSSYQPMYLTHEPLVDTHLQHLKSPSQGSPIQSSD.

Disordered regions lie at residues 1 to 29 and 119 to 146; these read MSLL…PKKS and GPIS…KGKE. S2 carries the post-translational modification N-acetylserine. S10 is subject to Phosphoserine. The 60-residue stretch at 182–241 folds into the FYR N-terminal domain; that stretch reads VFPIGLGGLTVYSLGEIITDRPGFHDESAIYPVGYCSTRIYASMKCPDQKCLYTCQIKDG. In terms of domain architecture, FYR C-terminal spans 242 to 321; that stretch reads GVQPQFEIVP…RKCINYQWVK (80 aa).

This sequence belongs to the TBRG1 family. Interacts with CDKN2A and MDM2. In terms of processing, ubiquitinated; mediated by MDM2 and leading to its subsequent proteasomal degradation. As to expression, widely expressed at low levels in most tissues, with highest levels in pancreas, lung and liver. Expression is decreased in primary tumors including lung, liver, breast, pancreas and kidney carcinomas, chronic lymphocytic leukemia and diffuse large B-cell lymphoma.

Its subcellular location is the nucleus. Its function is as follows. Acts as a growth inhibitor. Can activate p53/TP53, causes G1 arrest and collaborates with CDKN2A to restrict proliferation, but does not require either protein to inhibit DNA synthesis. Redistributes CDKN2A into the nucleoplasm. Involved in maintaining chromosomal stability. This chain is Transforming growth factor beta regulator 1 (TBRG1), found in Homo sapiens (Human).